The primary structure comprises 187 residues: Probable nicotinate-nucleotide adenylyltransferase (187 aa).

Belongs to the NadD family.

The enzyme catalyses nicotinate beta-D-ribonucleotide + ATP + H(+) = deamido-NAD(+) + diphosphate. It participates in cofactor biosynthesis; NAD(+) biosynthesis; deamido-NAD(+) from nicotinate D-ribonucleotide: step 1/1. Functionally, catalyzes the reversible adenylation of nicotinate mononucleotide (NaMN) to nicotinic acid adenine dinucleotide (NaAD). The protein is Probable nicotinate-nucleotide adenylyltransferase of Anaeromyxobacter dehalogenans (strain 2CP-C).